A 547-amino-acid chain; its full sequence is Chaperonin GroEL 1 (547 aa).

ATP is bound by residues 29–32, 86–90, glycine 418, 482–484, and aspartate 498; these read TLGP, DGTTT, and NAA.

The protein belongs to the chaperonin (HSP60) family. Forms a cylinder of 14 subunits composed of two heptameric rings stacked back-to-back. Interacts with the co-chaperonin GroES.

Its subcellular location is the cytoplasm. It catalyses the reaction ATP + H2O + a folded polypeptide = ADP + phosphate + an unfolded polypeptide.. In terms of biological role, together with its co-chaperonin GroES, plays an essential role in assisting protein folding. The GroEL-GroES system forms a nano-cage that allows encapsulation of the non-native substrate proteins and provides a physical environment optimized to promote and accelerate protein folding. This Corynebacterium jeikeium (strain K411) protein is Chaperonin GroEL 1.